The chain runs to 878 residues: MVDMYASLRSNVGTLGQILGDTIRTDLDDTFLDKIEQIRHLAKSSRQGDSAARKEMLTLLSSLSDDELVPFAKAFNQFLNLANIAEQFHTISRNCDELVCVPDPVEQLLGRMLGGNIDQEKVLACLKTLDIDLVLTAHPTEISRRTLIQKYSAVIDSLTAQENTQLTEQEKKQHHLRLRQLIAQIWHTNEIRNERPTPVDEARWGLCTIEASLWQAVPDFLRQLNQQVEERTNTQLPTDIAPVRFSSWMGGDRDGNPFVTSAVTQEVLDRNRHTAARLYLKDVVLLVNELSMEGANEALLAYTNNSNEPYRDVLRTLRQKLRNTIDYLNGRLEGQHPDVDPSEIIWHESDLKDPLMMLYQSLCDRGMSLIANGLLLDMLRRIACFGIHMLRLDVRQDADRHADVIAELTRYLGMGDYAHWDETEKQSFLLRELSSKRPLIPANWQASPEVEEVVKTCRLVATQPARAMGSYVISMASQPSDVLAVLLLLKETGCPHPMRVVPLFETLDDLNNASACMSALFSIDWYRGYTKGIQEVMIGYSDSAKDAGVMAAAWAQYTAQEKLVAISQEANIKLTLFHGRGGTIGRGGGPAHEAILSQPPGSVDGRIRVTEQGEMIRFKFGLPKLAVQSLALYTSAVMEATLLPPPEPKPEWRQCMQQLAEESVLAYRAIVREEPDFVSYFRAATPEIELGKLPLGSRPAKRRVDGGIESLRAIPWIFAWSQNRLMLPAWLGAGEALKAASERGDLPLLQEMEKHWPFFKTRISMLEMVYAKAEPNLSKFYETSLVPKELHHLGVQLRERLAIGIEAVLELTQAESLMAHTPWNRESVELRNPYIDPLNFLQAELLARTRREEQSSKNVELALMLTIAGVAAGMRNTG.

Residues H138 and K545 contribute to the active site.

The protein belongs to the PEPCase type 1 family. Requires Mg(2+) as cofactor.

It carries out the reaction oxaloacetate + phosphate = phosphoenolpyruvate + hydrogencarbonate. Its function is as follows. Forms oxaloacetate, a four-carbon dicarboxylic acid source for the tricarboxylic acid cycle. The polypeptide is Phosphoenolpyruvate carboxylase (Shewanella halifaxensis (strain HAW-EB4)).